Reading from the N-terminus, the 413-residue chain is Ras association domain-containing protein 5 (413 aa).

The tract at residues 1–103 (MASPAIGQRP…RPRDVRSIFE (103 aa)) is disordered. The segment covering 52 to 74 (SEDRGGRRSGRRDPEPTPRDCRH) has biased composition (basic and acidic residues). A Phorbol-ester/DAG-type zinc finger spans residues 117–165 (GHRFVELALRGGPGWCDLCGREVLRQALRCANCKFTCHSECRSLIQLDC). Phosphoserine is present on residues Ser-177 and Ser-274. The Ras-associating domain occupies 265 to 359 (PAATTDKRTS…LSFVLKENET (95 aa)). Thr-347 carries the post-translational modification Phosphothreonine. The region spanning 361–408 (EVEWDAFSIPELQNFLTILEKEEQDKIHQLQKKYNKFRQKLEEALRES) is the SARAH domain.

In terms of assembly, interacts directly with activated HRAS; a RASSF5-STK4/MST1 complex probably associates with activated HRAS. Interacts with KRAS. Probably interacts with Ras-like GTPases RRAS, MRAS, RAP1B, RAP2A and RALA. Interacts with RRAS2. Can self-associate. Interacts with RSSF1 isoform A. The RSSF1 isoform A-RSSF5 heterodimer probably mediates the association of RSSF1 with HRAS. Isoform 2 interacts with activated RAP1A and ITGAL/LFA-1. Binds STK4/MST1, inhibiting STK4/MST1 autoactivation.

The protein localises to the cytoplasm. The protein resides in the cytoskeleton. Its function is as follows. Potential tumor suppressor. Seems to be involved in lymphocyte adhesion by linking RAP1A activation upon T-cell receptor or chemokine stimulation to integrin activation. Isoform 2 stimulates lymphocyte polarization and the patch-like distribution of ITGAL/LFA-1, resulting in an enhanced adhesion to ICAM1. Together with RAP1A may participate in regulation of microtubule growth. The association of isoform 2 with activated RAP1A is required for directional movement of endothelial cells during wound healing. May be involved in regulation of Ras apoptotic function. The RASSF5-STK4/MST1 complex may mediate HRAS and KRAS induced apoptosis. The polypeptide is Ras association domain-containing protein 5 (Rassf5) (Mus musculus (Mouse)).